Reading from the N-terminus, the 677-residue chain is DNA-directed RNA polymerase subunit beta' (677 aa).

Cysteine 69, cysteine 71, cysteine 87, and cysteine 90 together coordinate Zn(2+). The Mg(2+) site is built by aspartate 489, aspartate 491, and aspartate 493.

This sequence belongs to the RNA polymerase beta' chain family. RpoC1 subfamily. In terms of assembly, in plastids the minimal PEP RNA polymerase catalytic core is composed of four subunits: alpha, beta, beta', and beta''. When a (nuclear-encoded) sigma factor is associated with the core the holoenzyme is formed, which can initiate transcription. Mg(2+) is required as a cofactor. Zn(2+) serves as cofactor.

The protein localises to the plastid. It is found in the chloroplast. The enzyme catalyses RNA(n) + a ribonucleoside 5'-triphosphate = RNA(n+1) + diphosphate. Functionally, DNA-dependent RNA polymerase catalyzes the transcription of DNA into RNA using the four ribonucleoside triphosphates as substrates. In Spinacia oleracea (Spinach), this protein is DNA-directed RNA polymerase subunit beta'.